We begin with the raw amino-acid sequence, 763 residues long: Phosphoglycerol transferase I (763 aa).

The next 4 helical transmembrane spans lie at 1 to 21 (MSELLSVALFLASVLIYAWKA), 26 to 46 (WWFAATLTVLGLFVILNITLY), 77 to 97 (ILPGIGIALALVAVFGALGWI), and 108 to 128 (VGYSLLALLLALGSVDASPAF).

The protein belongs to the OpgB family.

The protein localises to the cell inner membrane. The enzyme catalyses a phosphatidylglycerol + a membrane-derived-oligosaccharide D-glucose = a 1,2-diacyl-sn-glycerol + a membrane-derived-oligosaccharide 6-(glycerophospho)-D-glucose.. It participates in glycan metabolism; osmoregulated periplasmic glucan (OPG) biosynthesis. Functionally, transfers a phosphoglycerol residue from phosphatidylglycerol to the membrane-bound nascent glucan backbones. The chain is Phosphoglycerol transferase I from Salmonella newport (strain SL254).